The sequence spans 732 residues: Prolyl tripeptidyl peptidase (732 aa).

The first 24 residues, 1–24 (MKKTIFQQLFLSVCALTVALPCSA), serve as a signal peptide directing secretion. Catalysis depends on charge relay system residues Ser603, Asp678, and His710.

It belongs to the peptidase S9B family.

It catalyses the reaction Hydrolysis of Xaa-Xaa-Pro-|-Yaa- releasing the N-terminal tripeptide of a peptide with Pro as the third residue (position P1) and where Yaa is not proline.. Serine proteinase. Releases tripeptides from the free amino terminus of proteins. Has a requirement for Pro in the P1 position, but is inactivated by Pro in the P1' position. In Porphyromonas gingivalis (strain ATCC 33277 / DSM 20709 / CIP 103683 / JCM 12257 / NCTC 11834 / 2561), this protein is Prolyl tripeptidyl peptidase.